Reading from the N-terminus, the 347-residue chain is Mitochondrial glycine transporter (347 aa).

Solcar repeat units lie at residues 18 to 102, 138 to 222, and 247 to 331; these read SKPT…LRTA, LSHT…SKRS, and STAS…LIMW. Transmembrane regions (helical) follow at residues 24–49, 77–103, 144–169, 197–220, 251–277, and 306–324; these read FAAG…TRVQ, GTLP…RTAV, LITG…VRYE, GFGA…EQSK, INFI…KTRV, and GLGL…AWTV.

The protein belongs to the mitochondrial carrier (TC 2.A.29) family. SLC25A38 subfamily.

It localises to the mitochondrion inner membrane. It carries out the reaction glycine(in) = glycine(out). Mitochondrial glycine transporter that imports glycine into the mitochondrial matrix. Plays an important role in providing glycine for the first enzymatic step in heme biosynthesis, the condensation of glycine with succinyl-CoA to produce 5-aminolevulinate (ALA) in the mitochondrial matrix. The protein is Mitochondrial glycine transporter of Coccidioides immitis (strain RS) (Valley fever fungus).